The sequence spans 847 residues: Glycogen phosphorylase, liver form (847 aa).

A2 carries the post-translational modification N-acetylalanine. A Phosphoserine; by PHK; in form phosphorylase a modification is found at S15. AMP contacts are provided by residues 43–45, Y76, and R310; that span reads DRN. The residue at position 364 (K364) is an N6-succinyllysine. The residue at position 470 (K470) is an N6-acetyllysine. Phosphoserine occurs at positions 524, 561, and 639. The residue at position 681 (K681) is an N6-(pyridoxal phosphate)lysine. N6-acetyllysine is present on K796.

Belongs to the glycogen phosphorylase family. Homodimer; enzymatically active. Interacts with PPP1R3B; recruits the phosphatase PP1 which dephosphorylates and inactivates PYGL/glycogen phosphorylase. The cofactor is pyridoxal 5'-phosphate. Acetylation, which is up-regulated by glucose and insulin and down-regulated by glucagon, inhibits the glycogen phosphorylase activity by promoting PPP1R3B-mediated recruitment of phosphatase PP1 and Ser-15 dephosphorylation. Post-translationally, phosphorylation at Ser-15 converts inactive phosphorylase b into active phosphorylase a. Dephosphorylation of Ser-15 by phosphatase PP1 inactivates the enzyme.

It is found in the cytoplasm. The protein resides in the cytosol. It carries out the reaction [(1-&gt;4)-alpha-D-glucosyl](n) + phosphate = [(1-&gt;4)-alpha-D-glucosyl](n-1) + alpha-D-glucose 1-phosphate. With respect to regulation, allosterically regulated through the non-covalent binding of metabolites, being activated by AMP and inhibited by ATP, ADP, and glucose-6-phosphate. The activity is also controlled by post-translational modifications including phosphorylation and acetylation. Allosteric enzyme that catalyzes the rate-limiting step in glycogen catabolism, the phosphorolytic cleavage of glycogen to produce glucose-1-phosphate, and plays a central role in maintaining cellular and organismal glucose homeostasis. In Homo sapiens (Human), this protein is Glycogen phosphorylase, liver form.